We begin with the raw amino-acid sequence, 234 residues long: UPF0173 metal-dependent hydrolase Atu1317 (234 aa).

It belongs to the UPF0173 family.

The sequence is that of UPF0173 metal-dependent hydrolase Atu1317 from Agrobacterium fabrum (strain C58 / ATCC 33970) (Agrobacterium tumefaciens (strain C58)).